Here is a 206-residue protein sequence, read N- to C-terminus: Small ribosomal subunit protein uS4 (206 aa).

Positions 96-156 (SRLDNVVYRM…EKSKKQLRIQ (61 aa)) constitute an S4 RNA-binding domain.

The protein belongs to the universal ribosomal protein uS4 family. In terms of assembly, part of the 30S ribosomal subunit. Contacts protein S5. The interaction surface between S4 and S5 is involved in control of translational fidelity.

One of the primary rRNA binding proteins, it binds directly to 16S rRNA where it nucleates assembly of the body of the 30S subunit. In terms of biological role, with S5 and S12 plays an important role in translational accuracy. In Francisella philomiragia subsp. philomiragia (strain ATCC 25017 / CCUG 19701 / FSC 153 / O#319-036), this protein is Small ribosomal subunit protein uS4.